The sequence spans 207 residues: Ribosomal RNA small subunit methyltransferase G (207 aa).

S-adenosyl-L-methionine contacts are provided by residues Gly-73, Leu-78, 124–125 (VE), and Arg-139.

The protein belongs to the methyltransferase superfamily. RNA methyltransferase RsmG family.

The protein resides in the cytoplasm. The enzyme catalyses guanosine(527) in 16S rRNA + S-adenosyl-L-methionine = N(7)-methylguanosine(527) in 16S rRNA + S-adenosyl-L-homocysteine. Its function is as follows. Specifically methylates the N7 position of guanine in position 527 of 16S rRNA. The protein is Ribosomal RNA small subunit methyltransferase G of Shigella flexneri.